Here is a 150-residue protein sequence, read N- to C-terminus: Globin-2 (150 aa).

Residues 11–150 (PLSDAEKNKI…MICILLSSAY (140 aa)) enclose the Globin domain. Positions 74 and 106 each coordinate heme b.

This sequence belongs to the globin family. In terms of assembly, monomer.

The sequence is that of Globin-2 from Mordacia mordax (Southern hemisphere lamprey).